Consider the following 584-residue polypeptide: Sperm-associated microtubule inner protein 4 (584 aa).

Its subcellular location is the cytoplasm. It localises to the cytoskeleton. It is found in the microtubule organizing center. The protein resides in the centrosome. The protein localises to the flagellum axoneme. In terms of biological role, microtubule inner protein (MIP) part of the dynein-decorated doublet microtubules (DMTs) in flagellum axoneme. May serve to reinforce and thus stabilize the microtubule structure in the sperm flagella. In Bos taurus (Bovine), this protein is Sperm-associated microtubule inner protein 4 (SPMIP4).